Consider the following 424-residue polypeptide: UDP-N-acetylglucosamine 1-carboxyvinyltransferase (424 aa).

22–23 (KN) provides a ligand contact to phosphoenolpyruvate. Position 93 (Arg93) interacts with UDP-N-acetyl-alpha-D-glucosamine. Cys117 (proton donor) is an active-site residue. At Cys117 the chain carries 2-(S-cysteinyl)pyruvic acid O-phosphothioketal. UDP-N-acetyl-alpha-D-glucosamine-binding positions include 122 to 126 (RPVDL), 162 to 165 (KVSV), Asp307, and Ile329.

The protein belongs to the EPSP synthase family. MurA subfamily.

Its subcellular location is the cytoplasm. The enzyme catalyses phosphoenolpyruvate + UDP-N-acetyl-alpha-D-glucosamine = UDP-N-acetyl-3-O-(1-carboxyvinyl)-alpha-D-glucosamine + phosphate. It participates in cell wall biogenesis; peptidoglycan biosynthesis. In terms of biological role, cell wall formation. Adds enolpyruvyl to UDP-N-acetylglucosamine. This is UDP-N-acetylglucosamine 1-carboxyvinyltransferase from Haemophilus influenzae (strain PittEE).